Reading from the N-terminus, the 95-residue chain is Large ribosomal subunit protein uL23 (95 aa).

It belongs to the universal ribosomal protein uL23 family. As to quaternary structure, part of the 50S ribosomal subunit. Contacts protein L29, and trigger factor when it is bound to the ribosome.

In terms of biological role, one of the early assembly proteins it binds 23S rRNA. One of the proteins that surrounds the polypeptide exit tunnel on the outside of the ribosome. Forms the main docking site for trigger factor binding to the ribosome. In Bacillus licheniformis (strain ATCC 14580 / DSM 13 / JCM 2505 / CCUG 7422 / NBRC 12200 / NCIMB 9375 / NCTC 10341 / NRRL NRS-1264 / Gibson 46), this protein is Large ribosomal subunit protein uL23.